The following is a 208-amino-acid chain: ATP-dependent Clp protease proteolytic subunit (208 aa).

The Nucleophile role is filled by serine 101. Histidine 126 is an active-site residue.

Belongs to the peptidase S14 family. As to quaternary structure, component of the chloroplastic Clp protease core complex.

The protein localises to the plastid. It localises to the chloroplast stroma. The enzyme catalyses Hydrolysis of proteins to small peptides in the presence of ATP and magnesium. alpha-casein is the usual test substrate. In the absence of ATP, only oligopeptides shorter than five residues are hydrolyzed (such as succinyl-Leu-Tyr-|-NHMec, and Leu-Tyr-Leu-|-Tyr-Trp, in which cleavage of the -Tyr-|-Leu- and -Tyr-|-Trp bonds also occurs).. In terms of biological role, cleaves peptides in various proteins in a process that requires ATP hydrolysis. Has a chymotrypsin-like activity. Plays a major role in the degradation of misfolded proteins. The chain is ATP-dependent Clp protease proteolytic subunit from Nephroselmis olivacea (Green alga).